We begin with the raw amino-acid sequence, 75 residues long: ORF2p protein (75 aa).

The important for viral replication in intestinal cells stretch occupies residues 13–18; sequence WIGHPV. The chain crosses the lipid bilayer at residues 23–45; it reads IVYLFVGFTPLTLETLHTLNYII. Residues 53 to 75 form a disordered region; sequence APRSPHSDPARMRIPTQPRKAPL.

It is found in the host cytoplasmic vesicle membrane. Facilitates virus release from intestinal cells in vitro, possibly through the host autophagic pathway. In Human enterovirus 71 (strain USA/BrCr/1970) (EV71), this protein is ORF2p protein.